The primary structure comprises 92 residues: Conotoxin Im9.4 (92 aa).

An N-terminal signal peptide occupies residues 1–20 (MHRSLAGSAVLMLLLLFALG). Positions 21 to 62 (NFVGVQPGLVTRDADNGQLMDNRRNLRLERKTMSLFKSLDKR) are excised as a propeptide. Disulfide bonds link C65-C79, C69-C81, and C75-C87. At N90 the chain carries Asparagine amide.

The protein belongs to the conotoxin P superfamily. Expressed by the venom duct.

The protein localises to the secreted. Functionally, probable neurotoxin that inhibits ion channels. This is Conotoxin Im9.4 from Conus imperialis (Imperial cone).